Consider the following 118-residue polypeptide: Large ribosomal subunit protein bL20 (118 aa).

Belongs to the bacterial ribosomal protein bL20 family.

In terms of biological role, binds directly to 23S ribosomal RNA and is necessary for the in vitro assembly process of the 50S ribosomal subunit. It is not involved in the protein synthesizing functions of that subunit. In Caulobacter vibrioides (strain ATCC 19089 / CIP 103742 / CB 15) (Caulobacter crescentus), this protein is Large ribosomal subunit protein bL20.